Reading from the N-terminus, the 205-residue chain is Peptidyl-tRNA hydrolase (205 aa).

A tRNA-binding site is contributed by Tyr14. The active-site Proton acceptor is His19. TRNA-binding residues include Tyr64, Asn66, and Asn112.

It belongs to the PTH family. As to quaternary structure, monomer.

Its subcellular location is the cytoplasm. The enzyme catalyses an N-acyl-L-alpha-aminoacyl-tRNA + H2O = an N-acyl-L-amino acid + a tRNA + H(+). Hydrolyzes ribosome-free peptidyl-tRNAs (with 1 or more amino acids incorporated), which drop off the ribosome during protein synthesis, or as a result of ribosome stalling. In terms of biological role, catalyzes the release of premature peptidyl moieties from peptidyl-tRNA molecules trapped in stalled 50S ribosomal subunits, and thus maintains levels of free tRNAs and 50S ribosomes. This chain is Peptidyl-tRNA hydrolase, found in Parvibaculum lavamentivorans (strain DS-1 / DSM 13023 / NCIMB 13966).